Reading from the N-terminus, the 463-residue chain is Asparagine--tRNA ligase (463 aa).

It belongs to the class-II aminoacyl-tRNA synthetase family. As to quaternary structure, homodimer.

The protein resides in the cytoplasm. It catalyses the reaction tRNA(Asn) + L-asparagine + ATP = L-asparaginyl-tRNA(Asn) + AMP + diphosphate + H(+). The protein is Asparagine--tRNA ligase of Acholeplasma laidlawii (strain PG-8A).